A 403-amino-acid polypeptide reads, in one-letter code: MHNFEEELTCPICYSIFEDPRVLPCSHTFCRNCLENILQASGNFYIWRPLRIPLKCPNCRSITEIAPTGIESLPVNFALRAIIEKYQQEDHPDIVTCPEHYRQPLNVYCLLDKKLVCGHCLTIGQHHGHPIDDLQSAYLKEKDTPQKLLEQLTDTHWTDLTHLIEKLKEQKSHSEKMIQGDKEAVLQYFKELNDTLEQKKKSFLTALCDVGNLINQEYTPQIERMKEIREQQLELMALTISLQEESPLKFLEKVDDVRQHVQILKQRPLPEVQPVEIYPRVSKILKEEWSRTEIGQIKNVLIPKMKISPKRMSCSWPGKDEKEVEFLKILNIVVVTLISVILMSILFFNQHIITFLSEITLIWFSEASLSVYQSLSNSLHKVKNILCHIFYLLKEFVWKIVSH.

The segment at 10 to 60 (CPICYSIFEDPRVLPCSHTFCRNCLENILQASGNFYIWRPLRIPLKCPNCR) adopts an RING-type zinc-finger fold. A B box-type zinc finger spans residues 92-134 (PDIVTCPEHYRQPLNVYCLLDKKLVCGHCLTIGQHHGHPIDDL). Residues cysteine 97, histidine 100, cysteine 120, and histidine 126 each coordinate Zn(2+). Residues 163-246 (LIEKLKEQKS…ALTISLQEES (84 aa)) are a coiled coil. A helical transmembrane segment spans residues 329–349 (ILNIVVVTLISVILMSILFFN).

Belongs to the TRIM/RBCC family. In terms of assembly, interacts with ECSIT.

Its subcellular location is the endoplasmic reticulum membrane. It carries out the reaction S-ubiquitinyl-[E2 ubiquitin-conjugating enzyme]-L-cysteine + [acceptor protein]-L-lysine = [E2 ubiquitin-conjugating enzyme]-L-cysteine + N(6)-ubiquitinyl-[acceptor protein]-L-lysine.. It participates in protein modification; protein ubiquitination. Functionally, E3 ubiquitin ligase involved in different processes such as development and immune response. Serves as a negative regulator for innate immune signaling pathways by suppressing RLR-induced activation of IRF3/7 and NF-kappa-B via interaction with adapter ECSIT. Regulates autophagy through modulating both the transcription and the ubiquitination of BECN1. On the one hand, regulates the transcription of BECN1 through negatively modulating the NF-kappa-B pathway. On the other hand, regulates TRAF6-mediated 'Lys-63'-linked ubiquitination of BECN1, thus affecting the formation of the BECN1-PIK3C3 complex. In addition, mediates 'Lys-48'-linked ubiquitination of TRAF6 and thereby promotes TRAF6 proteasomal degradation. Also acts as a critical regulator for early embryo development from blastocyst stage to gastrula through modulating F-actin assembly and WASH1 'Lys-63'-linked ubiquitination. The chain is Tripartite motif-containing protein 59 (TRIM59) from Homo sapiens (Human).